The following is a 369-amino-acid chain: Glutamate 5-kinase (369 aa).

Lys-8 is an ATP binding site. 3 residues coordinate substrate: Ser-49, Asp-136, and Asn-148. ATP-binding positions include 168-169 and 212-218; these read TD and TGGMMTK. Residues 277–355 form the PUA domain; sequence TGKLYLDSGA…KEISTILGYV (79 aa).

This sequence belongs to the glutamate 5-kinase family.

It is found in the cytoplasm. The enzyme catalyses L-glutamate + ATP = L-glutamyl 5-phosphate + ADP. The protein operates within amino-acid biosynthesis; L-proline biosynthesis; L-glutamate 5-semialdehyde from L-glutamate: step 1/2. Its function is as follows. Catalyzes the transfer of a phosphate group to glutamate to form L-glutamate 5-phosphate. This Trichormus variabilis (strain ATCC 29413 / PCC 7937) (Anabaena variabilis) protein is Glutamate 5-kinase.